The following is a 246-amino-acid chain: Metallo-beta-lactamase type 2 (246 aa).

The N-terminal stretch at 1 to 20 (MKKLFVLCVCFFCSITAAGA) is a signal peptide. The Zn(2+) site is built by His95, His97, Asp99, His157, and Cys176. Asp99 contributes to the a beta-lactam binding site. A beta-lactam-binding residues include Lys179 and Asn185. His215 lines the Zn(2+) pocket.

Belongs to the metallo-beta-lactamase superfamily. Class-B beta-lactamase family. In terms of assembly, monomer. Zn(2+) is required as a cofactor.

Its subcellular location is the periplasm. It catalyses the reaction a beta-lactam + H2O = a substituted beta-amino acid. Its function is as follows. Confers resistance to the different beta-lactam antibiotics (penicillin, cephalosporin and carbapenem) via the hydrolysis of the beta-lactam ring. Exhibits higher catalytic efficiency toward ticarcillin and piperacillin than blaIMP-1. Exhibits catalytic activity for carbapenem compounds, but has a preference for imipenem and ertapenem over meropenem. Has high efficiency for the hydrolysis of cefuroxime. Exhibits hydrolysis of all cephalosporins tested. Exhibits no hydrolysis of temocillin, the 6-alpha-methoxy semisynthetic derivative of ticarcillin. In Pseudomonas aeruginosa, this protein is Metallo-beta-lactamase type 2.